The primary structure comprises 753 residues: Polyadenylate-binding protein, cytoplasmic and nuclear (753 aa).

The segment covering 1–43 (MSAEASTTPAAETPVNGTPETSTTPAAPAAEATAAETAAPSTS) has biased composition (low complexity). Residues 1 to 49 (MSAEASTTPAAETPVNGTPETSTTPAAPAAEATAAETAAPSTSQPHSAS) are disordered. RRM domains lie at 48–126 (ASLY…WSQR), 136–213 (GNVF…HHIS), 229–306 (TNVY…RAQK), and 332–460 (VNLY…LAQR). Disordered stretches follow at residues 363 to 417 (VMRD…SDKK), 607 to 649 (RGPG…PAAG), and 727 to 753 (GTEG…ENKS). Basic and acidic residues predominate over residues 376–417 (DSDKEKKEESKEEKPEAAEKTEEAAKESGDDQDKENKKSDKK). Residues 607 to 619 (RGPGYGQGRGGVP) are compositionally biased toward gly residues. Over residues 633–649 (QNAQPAAGRGEEAPAAG) the composition is skewed to low complexity. The region spanning 647 to 724 (AAGLTAQSLA…ALSVYDEYMK (78 aa)) is the PABC domain. Residues 737–753 (PKPKEAATEESTEENKS) are compositionally biased toward basic and acidic residues.

The protein belongs to the polyadenylate-binding protein type-1 family.

The protein localises to the cytoplasm. The protein resides in the nucleus. Its function is as follows. Binds the poly(A) tail of mRNA. Appears to be an important mediator of the multiple roles of the poly(A) tail in mRNA biogenesis, stability and translation. In the nucleus, involved in both mRNA cleavage and polyadenylation. Is also required for efficient mRNA export to the cytoplasm. Acts in concert with a poly(A)-specific nuclease (PAN) to affect poly(A) tail shortening, which may occur concomitantly with either nucleocytoplasmic mRNA transport or translational initiation. In the cytoplasm, stimulates translation initiation and regulates mRNA decay through translation termination-coupled poly(A) shortening, probably mediated by PAN. The polypeptide is Polyadenylate-binding protein, cytoplasmic and nuclear (pab1) (Aspergillus terreus (strain NIH 2624 / FGSC A1156)).